Reading from the N-terminus, the 270-residue chain is MENPVIIYVISDAIGETAQHIIRAVTAQFSLNKPADIRRHAFIRDESALLETLEEAKAADGIVVQTLVQAKLAEYATNFCVQNNIPNVDLLHTLTAAVEAKTGLKSKQDPGNMRRLDSNYFDRIAAIEFAVKYDDCKDPRGLLDADIVLVGVSRTSKTPLSSFLANQNWKVANVPLVPEIPIPAELFQIPAERIIGLTTTPEKLAQIRKVRLKSIGLDEASSYSSEKRILEELEYGYDTFKKLGCQVIHVEDKAIEETAALITEIITSYH.

151–158 (GVSRTSKT) serves as a coordination point for ADP.

This sequence belongs to the pyruvate, phosphate/water dikinase regulatory protein family. PDRP subfamily.

The enzyme catalyses N(tele)-phospho-L-histidyl/L-threonyl-[pyruvate, phosphate dikinase] + ADP = N(tele)-phospho-L-histidyl/O-phospho-L-threonyl-[pyruvate, phosphate dikinase] + AMP + H(+). It carries out the reaction N(tele)-phospho-L-histidyl/O-phospho-L-threonyl-[pyruvate, phosphate dikinase] + phosphate + H(+) = N(tele)-phospho-L-histidyl/L-threonyl-[pyruvate, phosphate dikinase] + diphosphate. Bifunctional serine/threonine kinase and phosphorylase involved in the regulation of the pyruvate, phosphate dikinase (PPDK) by catalyzing its phosphorylation/dephosphorylation. The protein is Putative pyruvate, phosphate dikinase regulatory protein 2 of Listeria monocytogenes serotype 4b (strain F2365).